The following is a 416-amino-acid chain: tRNA(Met) cytidine acetate ligase (416 aa).

Residues 7–20 (VVEYNPFHNGHLHH), glycine 101, asparagine 162, and 187–188 (RI) contribute to the ATP site.

The protein belongs to the TmcAL family.

Its subcellular location is the cytoplasm. It catalyses the reaction cytidine(34) in elongator tRNA(Met) + acetate + ATP = N(4)-acetylcytidine(34) in elongator tRNA(Met) + AMP + diphosphate. In terms of biological role, catalyzes the formation of N(4)-acetylcytidine (ac(4)C) at the wobble position of elongator tRNA(Met), using acetate and ATP as substrates. First activates an acetate ion to form acetyladenylate (Ac-AMP) and then transfers the acetyl group to tRNA to form ac(4)C34. This is tRNA(Met) cytidine acetate ligase from Halalkalibacterium halodurans (strain ATCC BAA-125 / DSM 18197 / FERM 7344 / JCM 9153 / C-125) (Bacillus halodurans).